The sequence spans 350 residues: Fe(2+) transport protein 2 (350 aa).

Positions 1–21 (MATTKLVYILLILFTFTVSPA) are cleaved as a signal peptide. Residues 22–47 (ISTAPEHCDSGFDNPCINKAKALPLK) are Extracellular-facing. The chain crosses the membrane as a helical span at residues 48-68 (IVAIVAILTTSLIGVTSPLFS). Over 69–80 (RYISFLRPDGNG) the chain is Cytoplasmic. The chain crosses the membrane as a helical span at residues 81-101 (FMIVKCFSSGIILGTGFMHVL). Over 102–120 (PDSFEMLSSKCLSDNPWHK) the chain is Extracellular. The helical transmembrane segment at 121–141 (FPFAGFVAMMSGLVTLAIDSI) threads the bilayer. Residues 142-195 (TTSLYTGKNSVGPVPDEEYGIDQEKAIHMVGHNHSHGHGVVLATKDDGQLLRYQ) lie on the Cytoplasmic side of the membrane. Residues 196–216 (VIAMVLEVGILFHSVVIGLSL) form a helical membrane-spanning segment. Over 217 to 227 (GATNDSCTIKG) the chain is Extracellular. A helical transmembrane segment spans residues 228 to 248 (LIIALCFHHLFEGIGLGGCIL). At 249-257 (QADFTNVKK) the chain is on the cytoplasmic side. Residues 258–278 (FLMAFFFTGTTPCGIFLGIAL) traverse the membrane as a helical segment. The Extracellular portion of the chain corresponds to 279-289 (SSIYRDNSPTA). A helical membrane pass occupies residues 290–310 (LITIGLLNACSAGMLIYMALV). At 311 to 329 (DLLATEFMGSMLQGSIKLQ) the chain is on the cytoplasmic side. The helical transmembrane segment at 330 to 350 (IKCFTAALLGCAVMSVVAVWA) threads the bilayer.

It belongs to the ZIP transporter (TC 2.A.5) family. Expressed in the external cell layers of the root subapical zone.

The protein resides in the cell membrane. Its function is as follows. High-affinity iron transporter that mediates under iron-deficiency the iron uptake from the rhizosphere across the plasma membrane in the root epidermal layer. Could also be capable of transporting zinc ions. This chain is Fe(2+) transport protein 2 (IRT2), found in Arabidopsis thaliana (Mouse-ear cress).